The primary structure comprises 344 residues: N-acetyl-gamma-glutamyl-phosphate reductase (344 aa).

The active site involves Cys-148.

Belongs to the NAGSA dehydrogenase family. Type 1 subfamily.

Its subcellular location is the cytoplasm. The enzyme catalyses N-acetyl-L-glutamate 5-semialdehyde + phosphate + NADP(+) = N-acetyl-L-glutamyl 5-phosphate + NADPH + H(+). The protein operates within amino-acid biosynthesis; L-arginine biosynthesis; N(2)-acetyl-L-ornithine from L-glutamate: step 3/4. Its function is as follows. Catalyzes the NADPH-dependent reduction of N-acetyl-5-glutamyl phosphate to yield N-acetyl-L-glutamate 5-semialdehyde. This is N-acetyl-gamma-glutamyl-phosphate reductase from Clostridium botulinum (strain Alaska E43 / Type E3).